The primary structure comprises 142 residues: Large ribosomal subunit protein uL13c (142 aa).

This sequence belongs to the universal ribosomal protein uL13 family. As to quaternary structure, part of the 50S ribosomal subunit.

Its subcellular location is the plastid. It localises to the chloroplast. This Porphyra purpurea (Red seaweed) protein is Large ribosomal subunit protein uL13c.